The primary structure comprises 329 residues: Anthranilate phosphoribosyltransferase (329 aa).

5-phospho-alpha-D-ribose 1-diphosphate is bound by residues G78, 81 to 82, T86, 88 to 91, 106 to 114, and S118; these read GD, NLST, and KHGNRSASG. G78 contacts anthranilate. Residue S90 coordinates Mg(2+). N109 contacts anthranilate. R164 provides a ligand contact to anthranilate. Mg(2+) contacts are provided by D221 and E222.

Belongs to the anthranilate phosphoribosyltransferase family. In terms of assembly, homodimer. Mg(2+) is required as a cofactor.

It carries out the reaction N-(5-phospho-beta-D-ribosyl)anthranilate + diphosphate = 5-phospho-alpha-D-ribose 1-diphosphate + anthranilate. It participates in amino-acid biosynthesis; L-tryptophan biosynthesis; L-tryptophan from chorismate: step 2/5. In terms of biological role, catalyzes the transfer of the phosphoribosyl group of 5-phosphorylribose-1-pyrophosphate (PRPP) to anthranilate to yield N-(5'-phosphoribosyl)-anthranilate (PRA). This is Anthranilate phosphoribosyltransferase from Pyrobaculum islandicum (strain DSM 4184 / JCM 9189 / GEO3).